The sequence spans 147 residues: D-aminoacyl-tRNA deacylase (147 aa).

Residues G136 to P137 carry the Gly-cisPro motif, important for rejection of L-amino acids motif.

The protein belongs to the DTD family. Homodimer.

It localises to the cytoplasm. The enzyme catalyses glycyl-tRNA(Ala) + H2O = tRNA(Ala) + glycine + H(+). It carries out the reaction a D-aminoacyl-tRNA + H2O = a tRNA + a D-alpha-amino acid + H(+). Functionally, an aminoacyl-tRNA editing enzyme that deacylates mischarged D-aminoacyl-tRNAs. Also deacylates mischarged glycyl-tRNA(Ala), protecting cells against glycine mischarging by AlaRS. Acts via tRNA-based rather than protein-based catalysis; rejects L-amino acids rather than detecting D-amino acids in the active site. By recycling D-aminoacyl-tRNA to D-amino acids and free tRNA molecules, this enzyme counteracts the toxicity associated with the formation of D-aminoacyl-tRNA entities in vivo and helps enforce protein L-homochirality. The protein is D-aminoacyl-tRNA deacylase of Streptococcus equi subsp. equi (strain 4047).